Here is a 257-residue protein sequence, read N- to C-terminus: Cytochrome c oxidase subunit 3 (257 aa).

Transmembrane regions (helical) follow at residues 15-35 (PWPL…VKWF), 82-102 (GMIL…WGFF), 124-144 (FLSA…VTWA), 156-176 (CLQG…LQGL), 194-214 (FFLA…FLMI), and 235-255 (AWYW…IYWW).

This sequence belongs to the cytochrome c oxidase subunit 3 family. Component of the cytochrome c oxidase (complex IV, CIV), a multisubunit enzyme composed of a catalytic core of 3 subunits and several supernumerary subunits. The complex exists as a monomer or a dimer and forms supercomplexes (SCs) in the inner mitochondrial membrane with ubiquinol-cytochrome c oxidoreductase (cytochrome b-c1 complex, complex III, CIII).

Its subcellular location is the mitochondrion inner membrane. The enzyme catalyses 4 Fe(II)-[cytochrome c] + O2 + 8 H(+)(in) = 4 Fe(III)-[cytochrome c] + 2 H2O + 4 H(+)(out). Functionally, component of the cytochrome c oxidase, the last enzyme in the mitochondrial electron transport chain which drives oxidative phosphorylation. The respiratory chain contains 3 multisubunit complexes succinate dehydrogenase (complex II, CII), ubiquinol-cytochrome c oxidoreductase (cytochrome b-c1 complex, complex III, CIII) and cytochrome c oxidase (complex IV, CIV), that cooperate to transfer electrons derived from NADH and succinate to molecular oxygen, creating an electrochemical gradient over the inner membrane that drives transmembrane transport and the ATP synthase. Cytochrome c oxidase is the component of the respiratory chain that catalyzes the reduction of oxygen to water. Electrons originating from reduced cytochrome c in the intermembrane space (IMS) are transferred via the dinuclear copper A center (CU(A)) of subunit 2 and heme A of subunit 1 to the active site in subunit 1, a binuclear center (BNC) formed by heme A3 and copper B (CU(B)). The BNC reduces molecular oxygen to 2 water molecules using 4 electrons from cytochrome c in the IMS and 4 protons from the mitochondrial matrix. In Artemia franciscana (Brine shrimp), this protein is Cytochrome c oxidase subunit 3 (COIII).